The chain runs to 447 residues: Trigger factor (447 aa).

A PPIase FKBP-type domain is found at 164–249; sequence GNQVTFDFEG…VKLVEKSKLP (86 aa).

It belongs to the FKBP-type PPIase family. Tig subfamily.

It localises to the cytoplasm. It carries out the reaction [protein]-peptidylproline (omega=180) = [protein]-peptidylproline (omega=0). In terms of biological role, involved in protein export. Acts as a chaperone by maintaining the newly synthesized protein in an open conformation. Functions as a peptidyl-prolyl cis-trans isomerase. The chain is Trigger factor from Psychrobacter arcticus (strain DSM 17307 / VKM B-2377 / 273-4).